Here is an 89-residue protein sequence, read N- to C-terminus: Small ribosomal subunit protein uS15 (89 aa).

The protein belongs to the universal ribosomal protein uS15 family. In terms of assembly, part of the 30S ribosomal subunit. Forms a bridge to the 50S subunit in the 70S ribosome, contacting the 23S rRNA.

In terms of biological role, one of the primary rRNA binding proteins, it binds directly to 16S rRNA where it helps nucleate assembly of the platform of the 30S subunit by binding and bridging several RNA helices of the 16S rRNA. Its function is as follows. Forms an intersubunit bridge (bridge B4) with the 23S rRNA of the 50S subunit in the ribosome. This Salinispora tropica (strain ATCC BAA-916 / DSM 44818 / JCM 13857 / NBRC 105044 / CNB-440) protein is Small ribosomal subunit protein uS15.